The primary structure comprises 292 residues: CCR4-NOT transcription complex subunit 8 (292 aa).

A divalent metal cation-binding residues include aspartate 40, glutamate 42, aspartate 161, and aspartate 230.

Belongs to the CAF1 family. As to quaternary structure, component of the CCR4-NOT complex; distinct complexes seem to exist that differ in the participation of probably mutually exclusive catalytic subunits; the complex contains two deadenylase subunits, CNOT6 or CNOT6L, and CNOT7 or CNOT8. In the complex interacts directly with CNOT1. Interacts with BTG1, BTG2 and TOB1. Interacts with BTG4.

It is found in the cytoplasm. Its subcellular location is the nucleus. The catalysed reaction is Exonucleolytic cleavage of poly(A) to 5'-AMP.. Functionally, has 3'-5' poly(A) exoribonuclease activity for synthetic poly(A) RNA substrate. Its function seems to be partially redundant with that of CNOT7. Catalytic component of the CCR4-NOT complex which is linked to various cellular processes including bulk mRNA degradation, miRNA-mediated repression, translational repression during translational initiation and general transcription regulation. During miRNA-mediated repression the complex also seems to act as translational repressor during translational initiation. Additional complex functions may be a consequence of its influence on mRNA expression. Associates with members of the BTG family such as TOB1 and BTG2 and is required for their anti-proliferative activity. This chain is CCR4-NOT transcription complex subunit 8 (CNOT8), found in Homo sapiens (Human).